Consider the following 306-residue polypeptide: Homoserine kinase (306 aa).

84 to 94 (PAGLGLGSSGA) contacts ATP.

This sequence belongs to the GHMP kinase family. Homoserine kinase subfamily.

It localises to the cytoplasm. It carries out the reaction L-homoserine + ATP = O-phospho-L-homoserine + ADP + H(+). It functions in the pathway amino-acid biosynthesis; L-threonine biosynthesis; L-threonine from L-aspartate: step 4/5. Its function is as follows. Catalyzes the ATP-dependent phosphorylation of L-homoserine to L-homoserine phosphate. This chain is Homoserine kinase, found in Sulfolobus acidocaldarius (strain ATCC 33909 / DSM 639 / JCM 8929 / NBRC 15157 / NCIMB 11770).